A 252-amino-acid polypeptide reads, in one-letter code: Imidazole glycerol phosphate synthase subunit HisF (252 aa).

Residues Asp11 and Asp130 contribute to the active site.

The protein belongs to the HisA/HisF family. As to quaternary structure, heterodimer of HisH and HisF.

Its subcellular location is the cytoplasm. The enzyme catalyses 5-[(5-phospho-1-deoxy-D-ribulos-1-ylimino)methylamino]-1-(5-phospho-beta-D-ribosyl)imidazole-4-carboxamide + L-glutamine = D-erythro-1-(imidazol-4-yl)glycerol 3-phosphate + 5-amino-1-(5-phospho-beta-D-ribosyl)imidazole-4-carboxamide + L-glutamate + H(+). It participates in amino-acid biosynthesis; L-histidine biosynthesis; L-histidine from 5-phospho-alpha-D-ribose 1-diphosphate: step 5/9. In terms of biological role, IGPS catalyzes the conversion of PRFAR and glutamine to IGP, AICAR and glutamate. The HisF subunit catalyzes the cyclization activity that produces IGP and AICAR from PRFAR using the ammonia provided by the HisH subunit. In Aromatoleum aromaticum (strain DSM 19018 / LMG 30748 / EbN1) (Azoarcus sp. (strain EbN1)), this protein is Imidazole glycerol phosphate synthase subunit HisF.